The following is a 501-amino-acid chain: L-arabinose isomerase (501 aa).

Glutamate 306, glutamate 333, histidine 350, and histidine 450 together coordinate Mn(2+).

This sequence belongs to the arabinose isomerase family. In terms of assembly, homohexamer. Mn(2+) is required as a cofactor.

It carries out the reaction beta-L-arabinopyranose = L-ribulose. The protein operates within carbohydrate degradation; L-arabinose degradation via L-ribulose; D-xylulose 5-phosphate from L-arabinose (bacterial route): step 1/3. Catalyzes the conversion of L-arabinose to L-ribulose. This Serratia proteamaculans (strain 568) protein is L-arabinose isomerase.